The following is a 793-amino-acid chain: Serine/threonine-protein kinase MARK1 (793 aa).

The segment at 1–40 (MSARTPLPTVNERDTENHTSVDGYTETHIPPTKSSSRQNI) is disordered. Threonine 5 bears the Phosphothreonine mark. The 252-residue stretch at 60–311 (YRLQKTIGKG…LEQIMKDRWM (252 aa)) folds into the Protein kinase domain. Residues 66-74 (IGKGNFAKV) and lysine 89 contribute to the ATP site. Residue aspartate 182 is the Proton acceptor of the active site. Position 208 is a phosphothreonine (threonine 208). Threonine 215 is subject to Phosphothreonine; by LKB1 and TAOK1. At serine 219 the chain carries Phosphoserine; by GSK3-beta. The UBA domain occupies 329-370 (DLNDAKRIDIMVTMGFARDEINDALVSQKYDEVMATYILLGR). Disordered stretches follow at residues 377–499 (GGES…GGSM) and 517–697 (LQNG…KPRS). Over residues 380–403 (SLSSGNLCQRSRPSSDLNNSTLQS) the composition is skewed to polar residues. Residues serine 382, serine 390, serine 393, serine 403, serine 423, and serine 444 each carry the phosphoserine modification. Over residues 447 to 459 (SEQKEEWDKDTAR) the composition is skewed to basic and acidic residues. A compositionally biased stretch (polar residues) spans 462-473 (GSTTVGSKSEVT). Serine 475 carries the phosphoserine modification. Positions 487 to 499 (AGPSNNVYSGGSM) are enriched in polar residues. 2 stretches are compositionally biased toward low complexity: residues 523–547 (SSLT…GPSA) and 585–599 (PAAS…ASTP). Position 588 is a phosphoserine (serine 588). Residue threonine 613 is modified to Phosphothreonine; by PKC/PRKCZ. The segment covering 647–657 (GTSTGIISKIT) has biased composition (polar residues). Basic and acidic residues-rich tracts occupy residues 661–676 (VRRD…RTDT) and 683–695 (EPKD…EAKP). At serine 666 the chain carries Phosphoserine. The KA1 domain maps to 744-793 (DARQDSLVQWEMEVCKLPRLSLNGVRFKRISGTSIAFKNIASKIANELKL).

It belongs to the protein kinase superfamily. CAMK Ser/Thr protein kinase family. SNF1 subfamily. In terms of assembly, interacts with MAPT/TAU. Mg(2+) serves as cofactor. In terms of processing, phosphorylation at Thr-613 by PRKCZ/aPKC in polarized epithelial cells inhibits the kinase activity. Phosphorylated at Thr-215 by STK11/LKB1 in complex with STE20-related adapter-alpha (STRADA) pseudo kinase and CAB39. Phosphorylation at Thr-215 by TAOK1 activates the kinase activity, leading to phosphorylation and detachment of MAPT/TAU from microtubules. Phosphorylation at Ser-219 by GSK3-beta (GSK3B) inhibits the kinase activity. Highly expressed in brain and spleen and at lower levels in kidney and skeletal muscle.

It localises to the cell membrane. Its subcellular location is the cytoplasm. It is found in the cytoskeleton. The protein resides in the cell projection. The protein localises to the dendrite. It catalyses the reaction L-seryl-[protein] + ATP = O-phospho-L-seryl-[protein] + ADP + H(+). It carries out the reaction L-threonyl-[protein] + ATP = O-phospho-L-threonyl-[protein] + ADP + H(+). The catalysed reaction is L-seryl-[tau protein] + ATP = O-phospho-L-seryl-[tau protein] + ADP + H(+). The enzyme catalyses L-threonyl-[tau protein] + ATP = O-phospho-L-threonyl-[tau protein] + ADP + H(+). Activated by phosphorylation on Thr-215. Inhibited by phosphorylation at Ser-219. Its function is as follows. Serine/threonine-protein kinase. Involved in cell polarity and microtubule dynamics regulation. Phosphorylates DCX, MAP2 and MAP4. Phosphorylates the microtubule-associated protein MAPT/TAU. Involved in cell polarity by phosphorylating the microtubule-associated proteins MAP2, MAP4 and MAPT/TAU at KXGS motifs, causing detachment from microtubules, and their disassembly. Involved in the regulation of neuronal migration through its dual activities in regulating cellular polarity and microtubule dynamics, possibly by phosphorylating and regulating DCX. Also acts as a positive regulator of the Wnt signaling pathway, probably by mediating phosphorylation of dishevelled proteins (DVL1, DVL2 and/or DVL3). In Rattus norvegicus (Rat), this protein is Serine/threonine-protein kinase MARK1.